A 63-amino-acid polypeptide reads, in one-letter code: Large ribosomal subunit protein bL32 (63 aa).

The segment covering 1-18 (MAHPKRRISRSRRDKRRA) has biased composition (basic residues). Residues 1-27 (MAHPKRRISRSRRDKRRAQYNAKTKAP) form a disordered region.

Belongs to the bacterial ribosomal protein bL32 family.

The chain is Large ribosomal subunit protein bL32 from Chloroherpeton thalassium (strain ATCC 35110 / GB-78).